Here is a 316-residue protein sequence, read N- to C-terminus: Pantothenate kinase (316 aa).

95–102 contributes to the ATP binding site; that stretch reads GSVAVGKS.

Belongs to the prokaryotic pantothenate kinase family.

It localises to the cytoplasm. It carries out the reaction (R)-pantothenate + ATP = (R)-4'-phosphopantothenate + ADP + H(+). It functions in the pathway cofactor biosynthesis; coenzyme A biosynthesis; CoA from (R)-pantothenate: step 1/5. This Shewanella loihica (strain ATCC BAA-1088 / PV-4) protein is Pantothenate kinase.